The chain runs to 613 residues: 9-cis-epoxycarotenoid dioxygenase NCED5, chloroplastic (613 aa).

The span at 1-15 (MPTTFTPNSPASSCS) shows a compositional bias: polar residues. Residues 1-36 (MPTTFTPNSPASSCSIHHRASPSRGARNSVRFTRPR) constitute a chloroplast transit peptide. The segment at 1 to 62 (MPTTFTPNSP…PPAYVPPPPP (62 aa)) is disordered. Positions 37-50 (AAAAATNSVLSAPS) are enriched in low complexity. Residues 51–62 (SVPPAYVPPPPP) are compositionally biased toward pro residues. Residues His-305, His-354, His-419, and His-600 each contribute to the Fe cation site.

The protein belongs to the carotenoid oxygenase family. Fe(2+) is required as a cofactor.

It is found in the plastid. The protein localises to the chloroplast. It catalyses the reaction a 9-cis-epoxycarotenoid + O2 = a 12'-apo-carotenal + 2-cis,4-trans-xanthoxin. The enzyme catalyses 9-cis-violaxanthin + O2 = (3S,5R,6S)-5,6-epoxy-3-hydroxy-5,6-dihydro-12'-apo-beta-caroten-12'-al + 2-cis,4-trans-xanthoxin. The catalysed reaction is 9'-cis-neoxanthin + O2 = (3S,5R,6R)-3,5-dihydroxy-6,7-didehydro-5,6-dihydro-12'-apo-beta-caroten-12'-al + 2-cis,4-trans-xanthoxin. Its function is as follows. Has a 11,12(11',12') 9-cis epoxycarotenoid cleavage activity. Catalyzes the first step of abscisic-acid biosynthesis from carotenoids. The polypeptide is 9-cis-epoxycarotenoid dioxygenase NCED5, chloroplastic (Oryza sativa subsp. japonica (Rice)).